Here is an 834-residue protein sequence, read N- to C-terminus: Probable receptor-like protein kinase At2g23200 (834 aa).

An N-terminal signal peptide occupies residues 1–28 (MENFCFQDSVSLFITIMVLVLLPRLSLS). The Extracellular portion of the chain corresponds to 29 to 405 (DTSTYTRPEN…SSSRVHIITG (377 aa)). 10 N-linked (GlcNAc...) asparagine glycosylation sites follow: Asn61, Asn149, Asn221, Asn246, Asn277, Asn289, Asn314, Asn352, Asn361, and Asn394. Residues 406–426 (CAVAAAAASALVFSLLFMVFL) traverse the membrane as a helical segment. The Cytoplasmic portion of the chain corresponds to 427–834 (KRRRSKKTKP…FSQLKISDAR (408 aa)). The 274-residue stretch at 488–761 (FDEQLLIGKG…RDVIWDLEYV (274 aa)) folds into the Protein kinase domain. ATP-binding positions include 494 to 502 (IGKGGFGYV) and Lys516. Asp613 acts as the Proton acceptor in catalysis.

The protein belongs to the protein kinase superfamily. Ser/Thr protein kinase family.

It localises to the membrane. This chain is Probable receptor-like protein kinase At2g23200, found in Arabidopsis thaliana (Mouse-ear cress).